A 638-amino-acid chain; its full sequence is Polypeptide N-acetylgalactosaminyltransferase 15 (638 aa).

Over 1–12 (MLPRKRPRSGRS) the chain is Cytoplasmic. Residues 13-35 (RLQFLLLFLTLGCVLMMVILLHP) form a helical; Signal-anchor for type II membrane protein membrane-spanning segment. The Lumenal portion of the chain corresponds to 36-638 (PPPTLHQAVT…FDQIHPVDER (603 aa)). The disordered stretch occupies residues 134–157 (KDWRTEEDGEESEEVLTPLGPDSD). Cystine bridges form between C181–C411, C402–C481, C516–C535, C561–C574, and C602–C619. Positions 190–299 (LPTASVILCF…PGWLEPLLSR (110 aa)) are catalytic subdomain A. D231 and R260 together coordinate substrate. D283, H285, and H416 together coordinate Mn(2+). Residues 357–419 (PVRSPVVPRE…PCSRVGHIYR (63 aa)) are catalytic subdomain B. R419 provides a ligand contact to substrate. A Ricin B-type lectin domain is found at 503–630 (RFSGKLHNTG…GKTSQLWRFD (128 aa)). N573 is a glycosylation site (N-linked (GlcNAc...) asparagine).

Belongs to the glycosyltransferase 2 family. GalNAc-T subfamily. It depends on Mn(2+) as a cofactor. In terms of tissue distribution, specifically expressed in testis.

The protein resides in the golgi apparatus membrane. It catalyses the reaction L-seryl-[protein] + UDP-N-acetyl-alpha-D-galactosamine = a 3-O-[N-acetyl-alpha-D-galactosaminyl]-L-seryl-[protein] + UDP + H(+). It carries out the reaction L-threonyl-[protein] + UDP-N-acetyl-alpha-D-galactosamine = a 3-O-[N-acetyl-alpha-D-galactosaminyl]-L-threonyl-[protein] + UDP + H(+). Its pathway is protein modification; protein glycosylation. In terms of biological role, catalyzes the initial reaction in O-linked oligosaccharide biosynthesis, the transfer of an N-acetyl-D-galactosamine residue to a serine or threonine residue on the protein receptor. Although it displays a much weaker activity toward all substrates tested compared to GALNT2, it is able to transfer up to seven GalNAc residues to the Muc5AC peptide, suggesting that it can fill vicinal Thr/Ser residues in cooperation with other GALNT proteins. Prefers Muc1a as substrate. This Mus musculus (Mouse) protein is Polypeptide N-acetylgalactosaminyltransferase 15 (Galnt15).